The sequence spans 401 residues: Haptoglobin (401 aa).

The first 18 residues, 1 to 18 (MSALQAVVTLLLCGQLLA), serve as a signal peptide directing secretion. 2 Sushi domains span residues 28–83 (DSCP…ECEE) and 85–142 (DSCP…ECEA). 3 disulfide bridges follow: Cys-49/Cys-81, Cys-106/Cys-140, and Cys-144/Cys-261. The region spanning 157–399 (IIGGSLDAKG…ILDWVRKTIA (243 aa)) is the Peptidase S1 domain. Residues Asn-286 and Asn-316 are each glycosylated (N-linked (GlcNAc...) asparagine). Intrachain disulfides connect Cys-304-Cys-335 and Cys-346-Cys-376. The interaction with CD163 stretch occupies residues 313–318 (APKNKT).

It belongs to the peptidase S1 family. Tetramer of two alpha and two beta chains; disulfide-linked. The hemoglobin/haptoglobin complex is composed of a haptoglobin dimer bound to two hemoglobin alpha-beta dimers. Interacts with CD163. Interacts with ERGIC3. As to expression, expressed by the liver and secreted in plasma.

It is found in the secreted. The protein localises to the extracellular space. Its function is as follows. As a result of hemolysis, hemoglobin is found to accumulate in the kidney and is secreted in the urine. Haptoglobin captures, and combines with free plasma hemoglobin to allow hepatic recycling of heme iron and to prevent kidney damage. Haptoglobin also acts as an antioxidant, has antibacterial activity and plays a role in modulating many aspects of the acute phase response. Hemoglobin/haptoglobin complexes are rapidly cleared by the macrophage CD163 scavenger receptor expressed on the surface of liver Kupfer cells through an endocytic lysosomal degradation pathway. This chain is Haptoglobin (HP), found in Bos taurus (Bovine).